A 559-amino-acid polypeptide reads, in one-letter code: Formate--tetrahydrofolate ligase (559 aa).

ATP is bound at residue 68–75; that stretch reads TPAGEGKT.

Belongs to the formate--tetrahydrofolate ligase family.

The enzyme catalyses (6S)-5,6,7,8-tetrahydrofolate + formate + ATP = (6R)-10-formyltetrahydrofolate + ADP + phosphate. Its pathway is one-carbon metabolism; tetrahydrofolate interconversion. This is Formate--tetrahydrofolate ligase from Rhizobium etli (strain CIAT 652).